The chain runs to 427 residues: Glucose-1-phosphate adenylyltransferase (427 aa).

Alpha-D-glucose 1-phosphate contacts are provided by residues tyrosine 112, glycine 177, 192-193 (EK), and serine 210.

Belongs to the bacterial/plant glucose-1-phosphate adenylyltransferase family. As to quaternary structure, homotetramer.

It catalyses the reaction alpha-D-glucose 1-phosphate + ATP + H(+) = ADP-alpha-D-glucose + diphosphate. It functions in the pathway glycan biosynthesis; glycogen biosynthesis. Its function is as follows. Involved in the biosynthesis of ADP-glucose, a building block required for the elongation reactions to produce glycogen. Catalyzes the reaction between ATP and alpha-D-glucose 1-phosphate (G1P) to produce pyrophosphate and ADP-Glc. The polypeptide is Glucose-1-phosphate adenylyltransferase (Methylobacillus flagellatus (strain ATCC 51484 / DSM 6875 / VKM B-1610 / KT)).